The primary structure comprises 1026 residues: MSANNNMESEIKEIESISFGMMSSEDIRQMSSFEVKTAKISSTNLLETVHDPKSGPIGSAPCETCHQNEWDCPGHFGHIELNVPIIHPLFINHVVNILKIFCWKCNEFLLTKDHLELNNILKLEKEKKFNAVLEKIKKCDRCVHCTTPRADYKLVLNDITYKTIYRTFSYQGGAVKTARDKKLNESREIVSAEMVKKIFDNIKLEYVEMLGISHPKDFCLEVFPVIPSCCRPHEVQDGNINDDDLTYQLMEIVKNNSMIGAIKLEKESMEKQYPECLKVKEILLLSNVEKQKKEIDDFLKKPIKNGLKTKKKINKEEITPLDQYLKLHDKYVKYVNNLKFRIETYCNNSQGKATHATTGRAIKGLRERLTGKEGQIRNNLLGKRCEMSARTVIGPDPTLKIDEVIVPKEIAQSLTFPDFVNKHNIDRLTKLVNSGNAIRLVKKNESGQEIKINLAAAINNHGTPLQHDDIIKRPKITNNHEEKHNYEEKHNFDTFETIVIKDPKNFVLKEGDILFRNNFQQKVVLPSKKFIKLEEGWIVHRYLQNGDILVLNRQPTLHKASMMALRVKIMDVKTFKFNLACTKPYNADFDGDEMNAHAPQSEESKAELFTLSTPKQCIMSCQSGKPNLTIVQDSLTGAYLMSKENNNDATLTNGEFNDILMVLTQNDEYNGDVVDYFLKRKEDVSNTLKKLGFSGTVLNGKGLLSLLFPNDLYINEEDLKINRGVIYDGCLTKKYLSSTESSLIKILYKEYGVETCATFLNNIQFLTNRWLMISSFSIHAGDCIKQKEVLGTVEQCLMESEKIKMTTQNPFIREQKIMQTLSNAKDVGMKIAKDALKRDNVNLHAQNNFLTTVESGSKGDHLNIAQITSLLGQQITEGQRVKPLLSNGKRTLPHYILKEENNDTEHFHDLLEEYESQGFISSSFAQGLNPKEFFFHCMAGRQGVCDTAMSTATSGYIMRRNVKLTEDIKVAYDGTVQDTRGRRFQMAYGELGYDPSKLVKVNGKPEVCNIARLVNKLNCNFEDNIK.

Zn(2+) is bound by residues C62, C65, C72, H75, C102, C105, and C142. D588, D590, and D592 together coordinate Mg(2+).

It belongs to the RNA polymerase beta' chain family.

It catalyses the reaction RNA(n) + a ribonucleoside 5'-triphosphate = RNA(n+1) + diphosphate. In terms of biological role, component of the DNA-dependent RNA polymerase that catalyzes the transcription of DNA into RNA using the four ribonucleoside triphosphates as substrates. Largest and catalytic component of RNA polymerase II which synthesizes mRNA precursors and many functional non-coding RNAs. Forms the polymerase active center together with the second largest subunit. This Acheta domesticus (House cricket) protein is Probable DNA-directed RNA polymerase II subunit RPB1 homolog.